A 914-amino-acid polypeptide reads, in one-letter code: Alanine--tRNA ligase (914 aa).

Zn(2+)-binding residues include H613, H617, C717, and H721.

It belongs to the class-II aminoacyl-tRNA synthetase family. Zn(2+) is required as a cofactor.

Its subcellular location is the cytoplasm. It catalyses the reaction tRNA(Ala) + L-alanine + ATP = L-alanyl-tRNA(Ala) + AMP + diphosphate. Catalyzes the attachment of alanine to tRNA(Ala) in a two-step reaction: alanine is first activated by ATP to form Ala-AMP and then transferred to the acceptor end of tRNA(Ala). Also edits incorrectly charged Ser-tRNA(Ala) and Gly-tRNA(Ala) via its editing domain. The polypeptide is Alanine--tRNA ligase (Pyrococcus furiosus (strain ATCC 43587 / DSM 3638 / JCM 8422 / Vc1)).